The chain runs to 184 residues: ATP-dependent protease subunit HslV (184 aa).

Thr-8 is an active-site residue. Na(+)-binding residues include Gly-165, Asp-168, and Thr-171.

This sequence belongs to the peptidase T1B family. HslV subfamily. A double ring-shaped homohexamer of HslV is capped on each side by a ring-shaped HslU homohexamer. The assembly of the HslU/HslV complex is dependent on binding of ATP.

The protein localises to the cytoplasm. The catalysed reaction is ATP-dependent cleavage of peptide bonds with broad specificity.. Allosterically activated by HslU binding. Functionally, protease subunit of a proteasome-like degradation complex believed to be a general protein degrading machinery. The sequence is that of ATP-dependent protease subunit HslV from Pediococcus pentosaceus (strain ATCC 25745 / CCUG 21536 / LMG 10740 / 183-1w).